The chain runs to 67 residues: Teratocyte protein CftICK-II (67 aa).

The first 25 residues, 1 to 25 (MVKSLLFAIGYLIFLLVTRVNVINA), serve as a signal peptide directing secretion. Cystine bridges form between cysteine 28–cysteine 42, cysteine 35–cysteine 46, and cysteine 41–cysteine 57.

In terms of tissue distribution, abundantly expressed by teratocytes, which are extra-embryonic cells released by parasitoid wasps into their hosts during larval eclosion.

The protein localises to the secreted. Its function is as follows. This endoparasitoid wasp peptide has immununosuppressive, antimicrobial and insecticidal activities. Suppress cellular immunity which is detectable as a reduction of hemocyte encapsulation in the host. Shows moderate antifungal activity against C.albicans (MIC=4 ug/ml). In vivo, ingestion of this peptide (probably at excessive doses) increases larval mortality and reduces leaf consumption of D.saccharalis, a permissive host for C.flavipes. The chain is Teratocyte protein CftICK-II from Cotesia flavipes (Parasitic wasp).